We begin with the raw amino-acid sequence, 81 residues long: Exodeoxyribonuclease 7 small subunit (81 aa).

Belongs to the XseB family. Heterooligomer composed of large and small subunits.

The protein localises to the cytoplasm. The enzyme catalyses Exonucleolytic cleavage in either 5'- to 3'- or 3'- to 5'-direction to yield nucleoside 5'-phosphates.. In terms of biological role, bidirectionally degrades single-stranded DNA into large acid-insoluble oligonucleotides, which are then degraded further into small acid-soluble oligonucleotides. The protein is Exodeoxyribonuclease 7 small subunit of Ruegeria sp. (strain TM1040) (Silicibacter sp.).